The primary structure comprises 546 residues: Chaperonin GroEL (546 aa).

ATP is bound by residues 29 to 32 (TMGP), K50, 86 to 90 (DGTTT), G414, and D492.

It belongs to the chaperonin (HSP60) family. In terms of assembly, forms a cylinder of 14 subunits composed of two heptameric rings stacked back-to-back. Interacts with the co-chaperonin GroES.

It is found in the cytoplasm. It carries out the reaction ATP + H2O + a folded polypeptide = ADP + phosphate + an unfolded polypeptide.. Its function is as follows. Together with its co-chaperonin GroES, plays an essential role in assisting protein folding. The GroEL-GroES system forms a nano-cage that allows encapsulation of the non-native substrate proteins and provides a physical environment optimized to promote and accelerate protein folding. The chain is Chaperonin GroEL from Helicobacter acinonychis (strain Sheeba).